A 983-amino-acid polypeptide reads, in one-letter code: Ephrin type-A receptor 3 (983 aa).

An N-terminal signal peptide occupies residues 1–19 (MDRRRLPLLLLCAALGSAG). Over 20–540 (RLSARPGNEV…SFSISSENSQ (521 aa)) the chain is Extracellular. Residues 28-206 (EVNLLDSKTI…YFKKCPFTVK (179 aa)) form the Eph LBD domain. Residues Asn231, Asn336, Asn390, Asn403, and Asn492 are each glycosylated (N-linked (GlcNAc...) asparagine). 2 Fibronectin type-III domains span residues 324-434 (PPSA…TNQA) and 435-530 (APSP…TSPD). A helical membrane pass occupies residues 541–564 (VVMIAISAAVAIILLTVVVYVLIG). Over 565–983 (RFCGYKKSKH…THTKNSPVPV (419 aa)) the chain is Cytoplasmic. Tyr596 and Tyr602 each carry phosphotyrosine; by autocatalysis. The region spanning 621–882 (ISIDKVVGAG…QIVSILDKLI (262 aa)) is the Protein kinase domain. Residues 628–633 (GAGEFG), Lys653, and 700–706 (EYMENGS) each bind ATP. Tyr701 is subject to Phosphotyrosine; by autocatalysis. Asp746 functions as the Proton acceptor in the catalytic mechanism. An ATP-binding site is contributed by 750-751 (RN). Residue Tyr779 is modified to Phosphotyrosine; by autocatalysis. The SAM domain occupies 911–975 (SAFRTAGDWL…VSSIKTLETH (65 aa)). The short motif at 981 to 983 (VPV) is the PDZ-binding element.

Belongs to the protein kinase superfamily. Tyr protein kinase family. Ephrin receptor subfamily. Heterotetramer upon binding of the ligand. The heterotetramer is composed of an ephrin dimer and a receptor dimer. Oligomerization is probably required to induce biological responses. Autophosphorylates upon activation by EFNA5. As to expression, highly expressed in the developing brain and embryonic tissues. In adult, the greatest levels of expression occur in the brain. It is expressed in a graded manner across the retina with the highest expression at its temporal pole. Detectable in all other adult tissues examined, except the liver.

It is found in the cell membrane. The catalysed reaction is L-tyrosyl-[protein] + ATP = O-phospho-L-tyrosyl-[protein] + ADP + H(+). Functionally, receptor tyrosine kinase which binds promiscuously membrane-bound ephrin family ligands residing on adjacent cells, leading to contact-dependent bidirectional signaling into neighboring cells. The signaling pathway downstream of the receptor is referred to as forward signaling while the signaling pathway downstream of the ephrin ligand is referred to as reverse signaling. Highly promiscuous for ephrin-A ligands it binds preferentially EFNA5. Upon activation by EFNA5 regulates cell-cell adhesion, cytoskeletal organization and cell migration. Plays a role in cardiac cells migration and differentiation probably through activation by EFNA1. Involved in the retinotectal mapping of neurons. May also control the segregation but not the guidance of motor and sensory axons during neuromuscular circuit development. The polypeptide is Ephrin type-A receptor 3 (EPHA3) (Gallus gallus (Chicken)).